Reading from the N-terminus, the 219-residue chain is Probable lipoprotein YiaD (219 aa).

The signal sequence occupies residues 1-20 (MKKRVYLIAAVVSGALAVSG). Cys-21 is lipidated: N-palmitoyl cysteine. Cys-21 is lipidated: S-diacylglycerol cysteine. A run of 2 helical transmembrane segments spans residues 37 to 55 (IGAG…LSSS) and 62 to 84 (GALI…MDVQ). The region spanning 103–219 (GDNIILNMPN…RRVEITLSPL (117 aa)) is the OmpA-like domain.

It localises to the cell inner membrane. The protein localises to the cell outer membrane. In terms of biological role, suppresses temperature-sensitive mutations in BamB when overexpressed. The protein is Probable lipoprotein YiaD (yiaD) of Escherichia coli (strain K12).